The primary structure comprises 452 residues: Isocitrate dehydrogenase [NADP], mitochondrial (452 aa).

Residues 1-39 (MAGYLRVVRSLCRASGSGSAWAPAALTAPNLQEQPRRHY) constitute a mitochondrion transit peptide. N6-acetyllysine is present on residues K45, K48, K67, and K69. N6-acetyllysine; alternate is present on residues K80 and K106. Residues K80 and K106 each carry the N6-succinyllysine; alternate modification. Residues 115–117 (TIT) and R122 each bind NADP(+). T117 serves as a coordination point for D-threo-isocitrate. D-threo-isocitrate contacts are provided by residues 134 to 140 (SPNGTIR) and R149. An N6-acetyllysine modification is found at K155. K166 bears the N6-acetyllysine; alternate mark. Position 166 is an N6-succinyllysine; alternate (K166). R172 lines the D-threo-isocitrate pocket. An N6-acetyllysine; alternate mark is found at K180 and K193. Residues K180 and K193 each carry the N6-succinyllysine; alternate modification. An N6-acetyllysine modification is found at K199. K256 bears the N6-acetyllysine; alternate mark. The residue at position 256 (K256) is an N6-succinyllysine; alternate. 4 positions are modified to N6-acetyllysine: K263, K272, K275, and K280. K282 is subject to N6-acetyllysine; alternate. At K282 the chain carries N6-succinyllysine; alternate. Residue D291 participates in Mn(2+) binding. K299 is a binding site for NADP(+). D314 is a binding site for Mn(2+). NADP(+) contacts are provided by residues 349 to 354 (GTVTRH) and N367. The residue at position 384 (K384) is an N6-acetyllysine; alternate. K384 is subject to N6-succinyllysine; alternate. Residues K400, K413, and K442 each carry the N6-acetyllysine modification.

This sequence belongs to the isocitrate and isopropylmalate dehydrogenases family. As to quaternary structure, homodimer. Mg(2+) serves as cofactor. Requires Mn(2+) as cofactor. Acetylation at Lys-413 dramatically reduces catalytic activity. Deacetylated by SIRT3.

The protein resides in the mitochondrion. The enzyme catalyses D-threo-isocitrate + NADP(+) = 2-oxoglutarate + CO2 + NADPH. Functionally, plays a role in intermediary metabolism and energy production. It may tightly associate or interact with the pyruvate dehydrogenase complex. The polypeptide is Isocitrate dehydrogenase [NADP], mitochondrial (IDH2) (Bos taurus (Bovine)).